We begin with the raw amino-acid sequence, 585 residues long: A-type ATP synthase subunit A (585 aa).

Residue 231-238 coordinates ATP; that stretch reads GPFGSGKT.

This sequence belongs to the ATPase alpha/beta chains family. In terms of assembly, has multiple subunits with at least A(3), B(3), C, D, E, F, H, I and proteolipid K(x).

It localises to the cell membrane. The catalysed reaction is ATP + H2O + 4 H(+)(in) = ADP + phosphate + 5 H(+)(out). Its function is as follows. Produces ATP from ADP in the presence of a proton gradient across the membrane. The archaeal alpha chain is a catalytic subunit. Component of the A-type ATP synthase that produces ATP from ADP in the presence of a proton gradient across the membrane. The A chain is the catalytic subunit. The sequence is that of A-type ATP synthase subunit A from Thermococcus kodakarensis (strain ATCC BAA-918 / JCM 12380 / KOD1) (Pyrococcus kodakaraensis (strain KOD1)).